Reading from the N-terminus, the 623-residue chain is Glutathione import ATP-binding protein GsiA (623 aa).

ABC transporter domains lie at 15–269 (VENL…RALL) and 314–564 (LRVR…RKLL). ATP is bound by residues 49-56 (GESGSGKS) and 357-364 (GESGSGKS).

The protein belongs to the ABC transporter superfamily. Glutathione importer (TC 3.A.1.5.11) family. The complex is composed of two ATP-binding proteins (GsiA), two transmembrane proteins (GsiC and GsiD) and a solute-binding protein (GsiB).

The protein localises to the cell inner membrane. It catalyses the reaction glutathione(out) + ATP + H2O = glutathione(in) + ADP + phosphate + H(+). With respect to regulation, inhibited by verapamil but not by carbonyl cyanide m-chlorophenylhydrazone (CCCP). Its function is as follows. Part of the ABC transporter complex GsiABCD involved in glutathione import. Responsible for energy coupling to the transport system. The polypeptide is Glutathione import ATP-binding protein GsiA (Escherichia coli (strain K12)).